We begin with the raw amino-acid sequence, 299 residues long: MSFTRQLTKNLTSFKVLAPFAAAVGSVGIAYQYSTSSIMNETGKTFTGNDEWIDLKLAKSWDTTHNTKHFVFELANQDDVSGLINASCLLTKFVTPKGNNVIRPYTPISDVDGKGSIEFVIKKYDGGKMSSHIHDLKPNDTLAFKGPVVKWKWEPNQYKSIALIGGGTGITPLYQLMHEITKNPEDKTKVNLFYGNLTEKDILIKKELDTIAEKHKDQVNVVYFLDKAPENWNGETGYISKEFLQSKLPGPGKDNKVFVCGPPGLYKALSGPKKSPTDQGEVEGALADLGYTKENVFKF.

Residues 13–35 (SFKVLAPFAAAVGSVGIAYQYST) form a helical membrane-spanning segment. Residues 50–154 (DEWIDLKLAK…KGPVVKWKWE (105 aa)) form the FAD-binding FR-type domain. 157 to 192 (QYKSIALIGGGTGITPLYQLMHEITKNPEDKTKVNL) is a binding site for FAD.

It belongs to the flavoprotein pyridine nucleotide cytochrome reductase family. Requires FAD as cofactor.

The protein localises to the mitochondrion outer membrane. The catalysed reaction is 2 Fe(III)-[cytochrome b5] + NADH = 2 Fe(II)-[cytochrome b5] + NAD(+) + H(+). May mediate the reduction of outer membrane cytochrome b5. This is NADH-cytochrome b5 reductase 2 (MCR1) from Debaryomyces hansenii (strain ATCC 36239 / CBS 767 / BCRC 21394 / JCM 1990 / NBRC 0083 / IGC 2968) (Yeast).